The sequence spans 343 residues: Cysteine proteinase 1 (343 aa).

Positions 1–18 are cleaved as a signal peptide; the sequence is MKVILLFVLAVFTVFVSS. A propeptide spans 19–117 (activation peptide); it reads RGIPLEEQSQ…DYLDDEFINS (99 aa). Cystine bridges form between cysteine 139–cysteine 190, cysteine 173–cysteine 224, and cysteine 279–cysteine 332. Residue cysteine 142 is part of the active site. Residues histidine 286 and asparagine 311 contribute to the active site.

It belongs to the peptidase C1 family. Post-translationally, phosphoglycosylated, contains GlcNAc-alpha-1-P-Ser residues.

The protein resides in the lysosome. Cysteine proteinases 1 and 2 are believed to participate in the breakdown of protein during differentiation of Dictyostelium as a response to starvation. This chain is Cysteine proteinase 1 (cprA), found in Dictyostelium discoideum (Social amoeba).